Here is a 186-residue protein sequence, read N- to C-terminus: Translation initiation factor IF-3 (186 aa).

The interval 1–20 is disordered; the sequence is MINRNSGKDRDRSRSGDKEL.

It belongs to the IF-3 family. As to quaternary structure, monomer.

It localises to the cytoplasm. Functionally, IF-3 binds to the 30S ribosomal subunit and shifts the equilibrium between 70S ribosomes and their 50S and 30S subunits in favor of the free subunits, thus enhancing the availability of 30S subunits on which protein synthesis initiation begins. This chain is Translation initiation factor IF-3, found in Borrelia duttonii (strain Ly).